Here is a 51-residue protein sequence, read N- to C-terminus: Insulin (51 aa).

Intrachain disulfides connect Cys7–Cys37, Cys19–Cys50, and Cys36–Cys41.

It belongs to the insulin family. As to quaternary structure, heterodimer of a B chain and an A chain linked by two disulfide bonds.

Its subcellular location is the secreted. Functionally, insulin decreases blood glucose concentration. It increases cell permeability to monosaccharides, amino acids and fatty acids. It accelerates glycolysis, the pentose phosphate cycle, and glycogen synthesis in liver. The protein is Insulin (INS) of Balaenoptera physalus (Fin whale).